The primary structure comprises 100 residues: Large ribosomal subunit protein bL21 (100 aa).

Belongs to the bacterial ribosomal protein bL21 family. As to quaternary structure, part of the 50S ribosomal subunit. Contacts protein L20.

In terms of biological role, this protein binds to 23S rRNA in the presence of protein L20. In Wolbachia pipientis wMel, this protein is Large ribosomal subunit protein bL21.